A 139-amino-acid polypeptide reads, in one-letter code: D-ribose pyranase (139 aa).

Catalysis depends on histidine 20, which acts as the Proton donor. Substrate contacts are provided by residues aspartate 28, histidine 106, and 128 to 130 (YAN).

This sequence belongs to the RbsD / FucU family. RbsD subfamily. In terms of assembly, homodecamer.

It is found in the cytoplasm. The enzyme catalyses beta-D-ribopyranose = beta-D-ribofuranose. Its pathway is carbohydrate metabolism; D-ribose degradation; D-ribose 5-phosphate from beta-D-ribopyranose: step 1/2. Catalyzes the interconversion of beta-pyran and beta-furan forms of D-ribose. This is D-ribose pyranase from Edwardsiella ictaluri (strain 93-146).